Consider the following 432-residue polypeptide: Glutamate-1-semialdehyde 2,1-aminomutase (432 aa).

Position 272 is an N6-(pyridoxal phosphate)lysine (Lys272).

The protein belongs to the class-III pyridoxal-phosphate-dependent aminotransferase family. HemL subfamily. In terms of assembly, homodimer. The cofactor is pyridoxal 5'-phosphate.

Its subcellular location is the cytoplasm. It catalyses the reaction (S)-4-amino-5-oxopentanoate = 5-aminolevulinate. The protein operates within porphyrin-containing compound metabolism; protoporphyrin-IX biosynthesis; 5-aminolevulinate from L-glutamyl-tRNA(Glu): step 2/2. It functions in the pathway porphyrin-containing compound metabolism; chlorophyll biosynthesis. The protein is Glutamate-1-semialdehyde 2,1-aminomutase of Picosynechococcus sp. (strain ATCC 27264 / PCC 7002 / PR-6) (Agmenellum quadruplicatum).